Here is a 618-residue protein sequence, read N- to C-terminus: Proline--tRNA ligase (618 aa).

The protein belongs to the class-II aminoacyl-tRNA synthetase family. ProS type 1 subfamily. In terms of assembly, homodimer.

The protein resides in the cytoplasm. It carries out the reaction tRNA(Pro) + L-proline + ATP = L-prolyl-tRNA(Pro) + AMP + diphosphate. Catalyzes the attachment of proline to tRNA(Pro) in a two-step reaction: proline is first activated by ATP to form Pro-AMP and then transferred to the acceptor end of tRNA(Pro). As ProRS can inadvertently accommodate and process non-cognate amino acids such as alanine and cysteine, to avoid such errors it has two additional distinct editing activities against alanine. One activity is designated as 'pretransfer' editing and involves the tRNA(Pro)-independent hydrolysis of activated Ala-AMP. The other activity is designated 'posttransfer' editing and involves deacylation of mischarged Ala-tRNA(Pro). The misacylated Cys-tRNA(Pro) is not edited by ProRS. In Streptococcus pyogenes serotype M28 (strain MGAS6180), this protein is Proline--tRNA ligase.